The sequence spans 278 residues: Biotin synthase (278 aa).

Positions M1–R227 constitute a Radical SAM core domain. Residues C16, C20, and C23 each coordinate [4Fe-4S] cluster. 3 residues coordinate [2Fe-2S] cluster: C60, C95, and C153.

This sequence belongs to the radical SAM superfamily. Biotin synthase family. As to quaternary structure, homodimer. The cofactor is [4Fe-4S] cluster. Requires [2Fe-2S] cluster as cofactor.

It carries out the reaction (4R,5S)-dethiobiotin + (sulfur carrier)-SH + 2 reduced [2Fe-2S]-[ferredoxin] + 2 S-adenosyl-L-methionine = (sulfur carrier)-H + biotin + 2 5'-deoxyadenosine + 2 L-methionine + 2 oxidized [2Fe-2S]-[ferredoxin]. It functions in the pathway cofactor biosynthesis; biotin biosynthesis; biotin from 7,8-diaminononanoate: step 2/2. Catalyzes the conversion of dethiobiotin (DTB) to biotin by the insertion of a sulfur atom into dethiobiotin via a radical-based mechanism. This is Biotin synthase from Campylobacter jejuni subsp. doylei (strain ATCC BAA-1458 / RM4099 / 269.97).